A 178-amino-acid polypeptide reads, in one-letter code: Redox-sensing transcriptional repressor Rex (178 aa).

59 to 64 (GVGNMG) contacts NAD(+).

Belongs to the transcriptional regulatory Rex family. In terms of assembly, homodimer.

Its subcellular location is the cytoplasm. Functionally, modulates transcription in response to changes in cellular NADH/NAD(+) redox state. The sequence is that of Redox-sensing transcriptional repressor Rex from Streptococcus suis.